A 207-amino-acid polypeptide reads, in one-letter code: Large ribosomal subunit protein uL4 (207 aa).

Positions 45-89 (RQGTHKVKTRSEVRGGGRKPWRQKGTGRARQGSIRSPQWRGGGTV) are disordered. The span at 60 to 71 (GGRKPWRQKGTG) shows a compositional bias: basic residues.

Belongs to the universal ribosomal protein uL4 family. Part of the 50S ribosomal subunit.

Its function is as follows. One of the primary rRNA binding proteins, this protein initially binds near the 5'-end of the 23S rRNA. It is important during the early stages of 50S assembly. It makes multiple contacts with different domains of the 23S rRNA in the assembled 50S subunit and ribosome. Functionally, forms part of the polypeptide exit tunnel. This is Large ribosomal subunit protein uL4 from Bacillus mycoides (strain KBAB4) (Bacillus weihenstephanensis).